We begin with the raw amino-acid sequence, 311 residues long: Thioredoxin reductase (311 aa).

35 to 42 (ERGIPGGQ) provides a ligand contact to FAD. Residues Cys-134 and Cys-137 are joined by a disulfide bond. Position 277–286 (277–286 (DVRDKGLRQI)) interacts with FAD.

It belongs to the class-II pyridine nucleotide-disulfide oxidoreductase family. In terms of assembly, homodimer. FAD serves as cofactor.

It localises to the cytoplasm. The catalysed reaction is [thioredoxin]-dithiol + NADP(+) = [thioredoxin]-disulfide + NADPH + H(+). This is Thioredoxin reductase (trxB) from Staphylococcus aureus (strain MRSA252).